A 713-amino-acid chain; its full sequence is Polyribonucleotide nucleotidyltransferase (713 aa).

Residues aspartate 493 and aspartate 499 each contribute to the Mg(2+) site. Residues 560-619 enclose the KH domain; sequence PRMITIKINPEKIRDVIGKGGSVIRALTEETGTTIDISDDGVVTIASTNSEGMAEAKKRI. The region spanning 629–697 is the S1 motif domain; it reads GHVYEGTVLK…EKGRVRLSAK (69 aa).

This sequence belongs to the polyribonucleotide nucleotidyltransferase family. Mg(2+) is required as a cofactor.

It is found in the cytoplasm. The catalysed reaction is RNA(n+1) + phosphate = RNA(n) + a ribonucleoside 5'-diphosphate. Involved in mRNA degradation. Catalyzes the phosphorolysis of single-stranded polyribonucleotides processively in the 3'- to 5'-direction. This Burkholderia mallei (strain NCTC 10247) protein is Polyribonucleotide nucleotidyltransferase.